Here is a 536-residue protein sequence, read N- to C-terminus: REST corepressor 2 (536 aa).

The segment at 1–44 (MERSGSGVLSRSRAKTVTNGNSQHSEEESSDEEHPNDSMIRVGG) is disordered. The segment covering 24-36 (HSEEESSDEEHPN) has biased composition (basic and acidic residues). The region spanning 38–123 (SMIRVGGDYQ…KSLADLANFT (86 aa)) is the ELM2 domain. The SANT 1 domain maps to 124–175 (PFPDEWTVEDKVLFEQAFSFHGKSFHRIQQMLPDKMITSLVKYYYSWKKTRT). Residues 179–264 (VMDRQARKLL…RARRRPPKGM (86 aa)) form a disordered region. Residues 197–211 (NDEIEEGDPGSDSDF) are compositionally biased toward acidic residues. Over residues 249–262 (YRHHPLRARRRPPK) the composition is skewed to basic residues. Residues 283–315 (VTIRQLDTQLVSLKRQVQKIKQTNSVLRNNLGD) adopt a coiled-coil conformation. The SANT 2 domain maps to 328-379 (KINSRWTTEEQLLAVQAVRRYGKDFAAIADVIGNKTVAQVSSFFVSYRRRFN). The segment at 389–536 (AEQEVQGSSG…GLKVESPQSH (148 aa)) is disordered. Residues 391–406 (QEVQGSSGRTVNTELN) are compositionally biased toward polar residues. Low complexity predominate over residues 422–449 (SPPHSDSPLPSSEGSASGNHSSAQSSPP). A compositionally biased stretch (pro residues) spans 450-476 (LTQPPPLLRPAPPSAPPSLLRQPPPLQ).

This sequence belongs to the CoREST family.

The protein localises to the nucleus. Functionally, may act as a component of a corepressor complex that represses transcription. The chain is REST corepressor 2 (rcor2) from Danio rerio (Zebrafish).